We begin with the raw amino-acid sequence, 112 residues long: T cell receptor alpha variable 17 (112 aa).

The N-terminal stretch at 1 to 21 (METLLGVSLVILWLQLARVNS) is a signal peptide. The region spanning 22 to 112 (QQGEEDPQAL…DTASYFCATD (91 aa)) is the Ig-like domain. 2 N-linked (GlcNAc...) asparagine glycosylation sites follow: Asn38 and Asn42. Cys43 and Cys109 are oxidised to a cystine.

In terms of assembly, alpha-beta TR is a heterodimer composed of an alpha and beta chain; disulfide-linked. The alpha-beta TR is associated with the transmembrane signaling CD3 coreceptor proteins to form the TR-CD3 (TcR or TCR). The assembly of alpha-beta TR heterodimers with CD3 occurs in the endoplasmic reticulum where a single alpha-beta TR heterodimer associates with one CD3D-CD3E heterodimer, one CD3G-CD3E heterodimer and one CD247 homodimer forming a stable octameric structure. CD3D-CD3E and CD3G-CD3E heterodimers preferentially associate with TR alpha and TR beta chains, respectively. The association of the CD247 homodimer is the last step of TcR assembly in the endoplasmic reticulum and is required for transport to the cell surface.

It is found in the cell membrane. In terms of biological role, v region of the variable domain of T cell receptor (TR) alpha chain that participates in the antigen recognition. Alpha-beta T cell receptors are antigen specific receptors which are essential to the immune response and are present on the cell surface of T lymphocytes. Recognize peptide-major histocompatibility (MH) (pMH) complexes that are displayed by antigen presenting cells (APC), a prerequisite for efficient T cell adaptive immunity against pathogens. Binding of alpha-beta TR to pMH complex initiates TR-CD3 clustering on the cell surface and intracellular activation of LCK that phosphorylates the ITAM motifs of CD3G, CD3D, CD3E and CD247 enabling the recruitment of ZAP70. In turn ZAP70 phosphorylates LAT, which recruits numerous signaling molecules to form the LAT signalosome. The LAT signalosome propagates signal branching to three major signaling pathways, the calcium, the mitogen-activated protein kinase (MAPK) kinase and the nuclear factor NF-kappa-B (NF-kB) pathways, leading to the mobilization of transcription factors that are critical for gene expression and essential for T cell growth and differentiation. The T cell repertoire is generated in the thymus, by V-(D)-J rearrangement. This repertoire is then shaped by intrathymic selection events to generate a peripheral T cell pool of self-MH restricted, non-autoaggressive T cells. Post-thymic interaction of alpha-beta TR with the pMH complexes shapes TR structural and functional avidity. This is T cell receptor alpha variable 17 from Homo sapiens (Human).